The sequence spans 579 residues: Glutamine--tRNA ligase (579 aa).

Positions 41–51 (PEPNGYLHIGH) match the 'HIGH' region motif. Residues 42 to 44 (EPN) and 48 to 54 (HIGHAKA) each bind ATP. L-glutamine is bound by residues aspartate 74 and tyrosine 218. ATP-binding positions include threonine 237, 285 to 286 (RL), and 293 to 295 (MSK). The short motif at 292-296 (VMSKR) is the 'KMSKS' region element.

It belongs to the class-I aminoacyl-tRNA synthetase family. Monomer.

It localises to the cytoplasm. The catalysed reaction is tRNA(Gln) + L-glutamine + ATP = L-glutaminyl-tRNA(Gln) + AMP + diphosphate. The sequence is that of Glutamine--tRNA ligase from Xanthomonas axonopodis pv. citri (strain 306).